Consider the following 305-residue polypeptide: Glutaminase (305 aa).

Substrate is bound by residues Ser-61, Asn-113, Glu-158, Asn-165, Tyr-189, Tyr-241, and Val-259.

It belongs to the glutaminase family. In terms of assembly, homotetramer.

It catalyses the reaction L-glutamine + H2O = L-glutamate + NH4(+). The polypeptide is Glutaminase (Alkaliphilus oremlandii (strain OhILAs) (Clostridium oremlandii (strain OhILAs))).